Reading from the N-terminus, the 209-residue chain is MTLSVNLCSGAEALPTEQEAASLAVECIEPLAQLPHDLPIFLVGMMGAGKTTIGRGLARALGREFIDLDHELEARCGVRVPVIFEIEGEAGFRKRESTALQECTQRRGIILATGGGAVLAEENRRLLRERGIVLYLRASVDELFRRTSRDRNRPLLATADPRGTLNDLMIKREPLYKEVADLVIETGAMPITTLIKAILPKLQAYEKKL.

47 to 52 (GAGKTT) lines the ATP pocket. Residue Thr-51 coordinates Mg(2+). Residues Asp-69, Arg-93, and Gly-115 each coordinate substrate. Arg-153 provides a ligand contact to ATP. Arg-172 serves as a coordination point for substrate.

This sequence belongs to the shikimate kinase family. In terms of assembly, monomer. The cofactor is Mg(2+).

It localises to the cytoplasm. It carries out the reaction shikimate + ATP = 3-phosphoshikimate + ADP + H(+). It functions in the pathway metabolic intermediate biosynthesis; chorismate biosynthesis; chorismate from D-erythrose 4-phosphate and phosphoenolpyruvate: step 5/7. Catalyzes the specific phosphorylation of the 3-hydroxyl group of shikimic acid using ATP as a cosubstrate. The polypeptide is Shikimate kinase (Bordetella avium (strain 197N)).